Reading from the N-terminus, the 1444-residue chain is Rho GTPase-activating protein 31 (1444 aa).

The Rho-GAP domain occupies 21-216 (CDLTEYLESS…FILNHVDQIF (196 aa)). S272 is modified (phosphoserine). Residue T286 is modified to Phosphothreonine. Residues S346, S349, and S387 each carry the phosphoserine modification. Residues 398–427 (WGQEGMPPGAEGGFDVSSDRSHLQGAQARP) are disordered. At S476 the chain carries Phosphoserine. A disordered region spans residues 504-631 (TNSTPCRTPP…ESSTLQESPR (128 aa)). The segment covering 515-534 (ELQSLSSLEEFSFHGSESGG) has biased composition (low complexity). Over residues 600–619 (NELEKRPNPEKVVEEGREAG) the composition is skewed to basic and acidic residues. A Phosphothreonine modification is found at T679. Disordered regions lie at residues 688-893 (SSLG…EDDT) and 906-1108 (EPWE…SSLN). Phosphoserine is present on residues S701 and S712. Positions 722–734 (PANQSTQGASTAA) are enriched in polar residues. The segment covering 735-745 (SREKPEPEQGL) has biased composition (basic and acidic residues). Positions 777–790 (LSPPLPPAPPPPTP) are enriched in pro residues. S778 is modified (phosphoserine). Phosphothreonine is present on T789. The span at 803 to 817 (GPEREDSSRKLRTDL) shows a compositional bias: basic and acidic residues. Positions 822-834 (LKSQDSPEISSLC) are enriched in polar residues. A compositionally biased stretch (basic and acidic residues) spans 839 to 848 (ATPRHSDKQN). Residues 960–977 (TVKSQWTLEVPSSSSCAN) are compositionally biased toward polar residues. Phosphoserine is present on S974. Over residues 992–1008 (PRREITGWDEKALRSFR) the composition is skewed to basic and acidic residues. Over residues 1028-1038 (VQPNPAETSPI) the composition is skewed to polar residues. Over residues 1064–1075 (GPESSKESSPSV) the composition is skewed to low complexity. Phosphoserine occurs at positions 1105, 1106, and 1178. Polar residues-rich tracts occupy residues 1211–1224 (QIPQ…SGEN) and 1234–1245 (EGPSSTSGTTQK). Positions 1211–1346 (QIPQPLPSQS…HRSRPGRPQS (136 aa)) are disordered. The segment covering 1246-1265 (PAKDDSPSSLESSKEEKPKQ) has biased composition (basic and acidic residues). Composition is skewed to polar residues over residues 1292–1303 (PGSSNLLSTQDA) and 1314–1323 (TEPSGDNLLS).

Interacts with ITSN1, which inhibits GAP activity. Interacts with PARVA. Interacts with GTP-loaded RHOU. In terms of processing, phosphorylation on Thr-789 reduces GAP activity.

The protein localises to the cell projection. The protein resides in the lamellipodium. It is found in the cell junction. It localises to the focal adhesion. Its function is as follows. Functions as a GTPase-activating protein (GAP) for RAC1 and CDC42. Required for cell spreading, polarized lamellipodia formation and cell migration. This is Rho GTPase-activating protein 31 (ARHGAP31) from Homo sapiens (Human).